A 306-amino-acid polypeptide reads, in one-letter code: Metal ABC transporter substrate-binding lipoprotein SloC (306 aa).

Residues 1–19 form the signal peptide; it reads MKKLSLLLLVCLSLLGLFA. C20 is lipidated: N-palmitoyl cysteine. The S-diacylglycerol cysteine moiety is linked to residue C20. H64, H136, E202, and D277 together coordinate a divalent metal cation.

This sequence belongs to the bacterial solute-binding protein 9 family. Lipoprotein receptor antigen (Lrai) subfamily.

The protein localises to the cell membrane. Part of the ATP-binding cassette (ABC) transport system SloABC involved in metal import. Binds a metal with high affinity and specificity and delivers it to the membrane permease for translocation into the cytoplasm. May act as an adhesin which is involved on adherence to extracellular matrix. It is an important factor in pathogenesis and infection. May contribute to the formation and accumulation of dental plaque. The polypeptide is Metal ABC transporter substrate-binding lipoprotein SloC (sloC) (Streptococcus mutans serotype c (strain ATCC 700610 / UA159)).